Here is a 94-residue protein sequence, read N- to C-terminus: Co-chaperonin GroES (94 aa).

The protein belongs to the GroES chaperonin family. Heptamer of 7 subunits arranged in a ring. Interacts with the chaperonin GroEL.

Its subcellular location is the cytoplasm. In terms of biological role, together with the chaperonin GroEL, plays an essential role in assisting protein folding. The GroEL-GroES system forms a nano-cage that allows encapsulation of the non-native substrate proteins and provides a physical environment optimized to promote and accelerate protein folding. GroES binds to the apical surface of the GroEL ring, thereby capping the opening of the GroEL channel. The sequence is that of Co-chaperonin GroES from Staphylococcus epidermidis.